Reading from the N-terminus, the 265-residue chain is Small ribosomal subunit protein eS1 (265 aa).

2 disordered regions span residues Met-1–Asp-24 and His-240–Gln-265. The segment covering His-240–Ala-253 has biased composition (basic and acidic residues).

This sequence belongs to the eukaryotic ribosomal protein eS1 family. Component of the small ribosomal subunit. Mature ribosomes consist of a small (40S) and a large (60S) subunit. The 40S subunit contains about 33 different proteins and 1 molecule of RNA (18S). The 60S subunit contains about 49 different proteins and 3 molecules of RNA (25S, 5.8S and 5S).

It localises to the cytoplasm. In Tetrahymena thermophila (strain SB210), this protein is Small ribosomal subunit protein eS1.